Here is a 482-residue protein sequence, read N- to C-terminus: Arginine/ornithine antiporter (482 aa).

Topologically, residues M1–R10 are cytoplasmic. A helical transmembrane segment spans residues L11 to P31. Topologically, residues Q32 to V40 are periplasmic. A helical transmembrane segment spans residues G41–F61. The Cytoplasmic segment spans residues Q62 to W100. The helical transmembrane segment at L101–F121 threads the bilayer. Residues G122–G124 lie on the Periplasmic side of the membrane. Residues D125–L145 form a helical membrane-spanning segment. At R146–T156 the chain is on the cytoplasmic side. A helical membrane pass occupies residues V157–F177. The Periplasmic portion of the chain corresponds to K178–R202. The helical transmembrane segment at N203–S223 threads the bilayer. Residues R224–T235 lie on the Cytoplasmic side of the membrane. A helical membrane pass occupies residues V236 to V256. The Periplasmic portion of the chain corresponds to M257 to A283. The chain crosses the membrane as a helical span at residues V284–L304. The Cytoplasmic segment spans residues C305–N333. The chain crosses the membrane as a helical span at residues A334 to G354. The Periplasmic portion of the chain corresponds to D355 to M365. A helical transmembrane segment spans residues L366–L386. Residues L387–K403 are Cytoplasmic-facing. The chain crosses the membrane as a helical span at residues D404 to L424. Position 425 (K425) is a topological domain, periplasmic. A helical membrane pass occupies residues Y426–H446. The Cytoplasmic portion of the chain corresponds to E447–K458. Residues L459–F479 form a helical membrane-spanning segment. The Periplasmic segment spans residues L480–L482.

The protein belongs to the amino acid-polyamine-organocation (APC) superfamily. Basic amino acid/polyamine antiporter (APA) (TC 2.A.3.2) family.

Its subcellular location is the cell inner membrane. The catalysed reaction is L-ornithine(in) + L-arginine(out) = L-ornithine(out) + L-arginine(in). Functionally, catalyzes electroneutral exchange between arginine and ornithine to allow high-efficiency energy conversion in the arginine deiminase pathway. Also mediates the proton motive force-driven uptake of arginine and ornithine, but the exchange is several orders of magnitude faster than the proton motive force-driven transport. The protein is Arginine/ornithine antiporter of Pseudomonas aeruginosa (strain ATCC 15692 / DSM 22644 / CIP 104116 / JCM 14847 / LMG 12228 / 1C / PRS 101 / PAO1).